A 318-amino-acid chain; its full sequence is DNA-directed RNA polymerase subunit alpha (318 aa).

Residues 1–227 (MTQFEIECLD…NLFSPLKTID (227 aa)) form an alpha N-terminal domain (alpha-NTD) region. The interval 241-318 (HINQILIEEL…KEKTTKIYNK (78 aa)) is alpha C-terminal domain (alpha-CTD).

This sequence belongs to the RNA polymerase alpha chain family. In terms of assembly, in plastids the minimal PEP RNA polymerase catalytic core is composed of four subunits: alpha, beta, beta', and beta''. When a (nuclear-encoded) sigma factor is associated with the core the holoenzyme is formed, which can initiate transcription.

It is found in the plastid. Its subcellular location is the chloroplast. The catalysed reaction is RNA(n) + a ribonucleoside 5'-triphosphate = RNA(n+1) + diphosphate. Its function is as follows. DNA-dependent RNA polymerase catalyzes the transcription of DNA into RNA using the four ribonucleoside triphosphates as substrates. This chain is DNA-directed RNA polymerase subunit alpha, found in Guillardia theta (Cryptophyte).